The primary structure comprises 658 residues: Protein translocase subunit SecA 3 (658 aa).

ATP-binding positions include Gln-111, 129–133 (GEGKT), and Asp-536.

Belongs to the SecA family. As to quaternary structure, monomer and homodimer. Part of the essential Sec protein translocation apparatus which comprises SecA, SecYEG and auxiliary proteins SecDF-YajC and YidC.

It localises to the cell inner membrane. Its subcellular location is the cytoplasm. The enzyme catalyses ATP + H2O + cellular proteinSide 1 = ADP + phosphate + cellular proteinSide 2.. Functionally, part of the Sec protein translocase complex. Interacts with the SecYEG preprotein conducting channel. Has a central role in coupling the hydrolysis of ATP to the transfer of proteins into and across the cell membrane, serving both as a receptor for the preprotein-SecB complex and as an ATP-driven molecular motor driving the stepwise translocation of polypeptide chains across the membrane. In Magnetococcus marinus (strain ATCC BAA-1437 / JCM 17883 / MC-1), this protein is Protein translocase subunit SecA 3.